The sequence spans 267 residues: Translation initiation factor 2 subunit alpha (267 aa).

The S1 motif domain occupies Gly-12–Lys-83.

This sequence belongs to the eIF-2-alpha family. Heterotrimer composed of an alpha, a beta and a gamma chain.

Its function is as follows. eIF-2 functions in the early steps of protein synthesis by forming a ternary complex with GTP and initiator tRNA. This Staphylothermus marinus (strain ATCC 43588 / DSM 3639 / JCM 9404 / F1) protein is Translation initiation factor 2 subunit alpha.